The sequence spans 189 residues: MQALLAAPLAKAEELNPLLPHAIEIVLSLVVFGLLLFAVWKFVTPRFEQIYTERTQAIEGGLAAAETKQAEADAKLADLEQQLSEARHEAARIREEAREQGAQIIAEMREQAQADAARIVEHGKTQIEAERQQAVTSLRAEVGTLATSLAGRIVGESLEDDDRSARVVERFLADLETIEASQAAGGGES.

A helical membrane pass occupies residues 23-43; it reads IEIVLSLVVFGLLLFAVWKFV.

It belongs to the ATPase B chain family. F-type ATPases have 2 components, F(1) - the catalytic core - and F(0) - the membrane proton channel. F(1) has five subunits: alpha(3), beta(3), gamma(1), delta(1), epsilon(1). F(0) has three main subunits: a(1), b(2) and c(10-14). The alpha and beta chains form an alternating ring which encloses part of the gamma chain. F(1) is attached to F(0) by a central stalk formed by the gamma and epsilon chains, while a peripheral stalk is formed by the delta and b chains.

It is found in the cell membrane. Its function is as follows. F(1)F(0) ATP synthase produces ATP from ADP in the presence of a proton or sodium gradient. F-type ATPases consist of two structural domains, F(1) containing the extramembraneous catalytic core and F(0) containing the membrane proton channel, linked together by a central stalk and a peripheral stalk. During catalysis, ATP synthesis in the catalytic domain of F(1) is coupled via a rotary mechanism of the central stalk subunits to proton translocation. Component of the F(0) channel, it forms part of the peripheral stalk, linking F(1) to F(0). The chain is ATP synthase subunit b from Nocardioides sp. (strain ATCC BAA-499 / JS614).